The sequence spans 202 residues: ATP-dependent Clp protease proteolytic subunit (202 aa).

Residue S106 is the Nucleophile of the active site. H131 is a catalytic residue.

Belongs to the peptidase S14 family. As to quaternary structure, fourteen ClpP subunits assemble into 2 heptameric rings which stack back to back to give a disk-like structure with a central cavity, resembling the structure of eukaryotic proteasomes.

The protein resides in the cytoplasm. It catalyses the reaction Hydrolysis of proteins to small peptides in the presence of ATP and magnesium. alpha-casein is the usual test substrate. In the absence of ATP, only oligopeptides shorter than five residues are hydrolyzed (such as succinyl-Leu-Tyr-|-NHMec, and Leu-Tyr-Leu-|-Tyr-Trp, in which cleavage of the -Tyr-|-Leu- and -Tyr-|-Trp bonds also occurs).. Functionally, cleaves peptides in various proteins in a process that requires ATP hydrolysis. Has a chymotrypsin-like activity. Plays a major role in the degradation of misfolded proteins. This is ATP-dependent Clp protease proteolytic subunit from Verminephrobacter eiseniae (strain EF01-2).